The following is a 430-amino-acid chain: MLDPNMLRNELDAVAEKLARRGFKLDVEMLRQQEERRKVLQVETESLQAERNSRSKLIGAAKARGEDIEPLRLEVNELGEKLDAAKAELDKLQNEIRDLALSIPNLPDDSVPVGKDENDNLEVSRWGEPRQYDFEVRDHVSLGEMAGGLDFAAAVKLTGARFVVMKGQIARMHRALAQFMLDLHTEKHGYLETYVPYLVNHATLYGTGQLPKFGGDLFHTKPLEEESDSSNYALIPTAEVPVTNLVRDEILEEESLPLKMTAHTPCFRSEAGSYGRDTRGLIRMHQFDKVEMVQITRPEDSMAALEELTGHAEKVLQLLELPYRKMLLCTGDMGFGSSKTYDLEVWLPAQNTYREISSCSNMWDFQARRMQARCRNKTDRKTRLVHTLNGSGLAVGRTLVAVLENYQQADGRIQVPEVLRPYMGGLEFIG.

Position 237 to 239 (237 to 239) interacts with L-serine; it reads TAE. 268–270 serves as a coordination point for ATP; it reads RSE. Residue E291 coordinates L-serine. An ATP-binding site is contributed by 355 to 358; that stretch reads EISS. S391 is a binding site for L-serine.

Belongs to the class-II aminoacyl-tRNA synthetase family. Type-1 seryl-tRNA synthetase subfamily. In terms of assembly, homodimer. The tRNA molecule binds across the dimer.

The protein resides in the cytoplasm. It carries out the reaction tRNA(Ser) + L-serine + ATP = L-seryl-tRNA(Ser) + AMP + diphosphate + H(+). The catalysed reaction is tRNA(Sec) + L-serine + ATP = L-seryl-tRNA(Sec) + AMP + diphosphate + H(+). The protein operates within aminoacyl-tRNA biosynthesis; selenocysteinyl-tRNA(Sec) biosynthesis; L-seryl-tRNA(Sec) from L-serine and tRNA(Sec): step 1/1. In terms of biological role, catalyzes the attachment of serine to tRNA(Ser). Is also able to aminoacylate tRNA(Sec) with serine, to form the misacylated tRNA L-seryl-tRNA(Sec), which will be further converted into selenocysteinyl-tRNA(Sec). The chain is Serine--tRNA ligase from Yersinia enterocolitica serotype O:8 / biotype 1B (strain NCTC 13174 / 8081).